A 298-amino-acid chain; its full sequence is 4-hydroxy-tetrahydrodipicolinate synthase (298 aa).

Thr51 contributes to the pyruvate binding site. The active-site Proton donor/acceptor is Tyr140. Lys168 functions as the Schiff-base intermediate with substrate in the catalytic mechanism. Ile210 provides a ligand contact to pyruvate.

It belongs to the DapA family. In terms of assembly, homotetramer; dimer of dimers.

The protein localises to the cytoplasm. It carries out the reaction L-aspartate 4-semialdehyde + pyruvate = (2S,4S)-4-hydroxy-2,3,4,5-tetrahydrodipicolinate + H2O + H(+). Its pathway is amino-acid biosynthesis; L-lysine biosynthesis via DAP pathway; (S)-tetrahydrodipicolinate from L-aspartate: step 3/4. Catalyzes the condensation of (S)-aspartate-beta-semialdehyde [(S)-ASA] and pyruvate to 4-hydroxy-tetrahydrodipicolinate (HTPA). This chain is 4-hydroxy-tetrahydrodipicolinate synthase, found in Acidovorax sp. (strain JS42).